The following is a 659-amino-acid chain: Protein SCARECROW 1 (659 aa).

2 disordered regions span residues 1 to 33 (MGSSSLLLFPSSSSSATHSSYSPSSSSHAITSL) and 188 to 285 (SDPA…KQRD). The span at 190-228 (PAPPPPPPPSHPALLPPDATAPPPPPTSVAALPPPPPPQ) shows a compositional bias: pro residues. Residues 258–271 (AAAAAAAAAAALAA) show a composition bias toward low complexity. Residues 258–289 (AAAAAAAAAAALAAAKERKEEQRRKQRDEEGL) adopt a coiled-coil conformation. Residues 272–285 (AKERKEEQRRKQRD) show a composition bias toward basic and acidic residues. A GRAS domain is found at 282–652 (KQRDEEGLHL…LCLLTASAWR (371 aa)). The segment at 289–353 (LHLLTLLLQC…VSSCLGLYAP (65 aa)) is leucine repeat I (LRI). The short motif at 296–300 (LQCAE) is the LxCxE motif element. A VHIID region spans residues 372–437 (FQVFNGISPF…GGPPRVRLTG (66 aa)). The VHIID motif lies at 403–407 (VHIID). The segment at 447-479 (ATGKRLSDFADTLGLPFEFCPVADKAGNLDPEK) is leucine repeat II (LRII). The interval 488-575 (VAVHWLRHSL…QQLLSREIRN (88 aa)) is PFYRE. The tract at residues 578–652 (AVGGPARTGD…LCLLTASAWR (75 aa)) is SAW.

The protein belongs to the GRAS family. As to quaternary structure, interacts with SHR1, but not with SHR2.

It localises to the nucleus. Functionally, transcription factor required for quiescent center cells specification and maintenance of surrounding stem cells, and for the asymmetric cell division involved in radial pattern formation in roots. Essential for cell division but not differentiation of the ground tissue. Regulates the radial organization of the shoot axial organs. Restricts SHR movment and sequesters it into the nucleus of the endodermis. In Oryza sativa subsp. indica (Rice), this protein is Protein SCARECROW 1 (SCR1).